The chain runs to 189 residues: Pyridoxal 5'-phosphate synthase subunit PdxT (189 aa).

An L-glutamine-binding site is contributed by 47 to 49 (GES). Residue cysteine 79 is the Nucleophile of the active site. L-glutamine contacts are provided by residues arginine 106 and 135 to 136 (IR). Active-site charge relay system residues include histidine 171 and glutamate 173.

The protein belongs to the glutaminase PdxT/SNO family. In terms of assembly, in the presence of PdxS, forms a dodecamer of heterodimers. Only shows activity in the heterodimer.

It carries out the reaction aldehydo-D-ribose 5-phosphate + D-glyceraldehyde 3-phosphate + L-glutamine = pyridoxal 5'-phosphate + L-glutamate + phosphate + 3 H2O + H(+). The catalysed reaction is L-glutamine + H2O = L-glutamate + NH4(+). It participates in cofactor biosynthesis; pyridoxal 5'-phosphate biosynthesis. Functionally, catalyzes the hydrolysis of glutamine to glutamate and ammonia as part of the biosynthesis of pyridoxal 5'-phosphate. The resulting ammonia molecule is channeled to the active site of PdxS. The chain is Pyridoxal 5'-phosphate synthase subunit PdxT from Caldanaerobacter subterraneus subsp. tengcongensis (strain DSM 15242 / JCM 11007 / NBRC 100824 / MB4) (Thermoanaerobacter tengcongensis).